We begin with the raw amino-acid sequence, 345 residues long: Phosphoribosylformylglycinamidine cyclo-ligase (345 aa).

This sequence belongs to the AIR synthase family.

It localises to the cytoplasm. The catalysed reaction is 2-formamido-N(1)-(5-O-phospho-beta-D-ribosyl)acetamidine + ATP = 5-amino-1-(5-phospho-beta-D-ribosyl)imidazole + ADP + phosphate + H(+). It functions in the pathway purine metabolism; IMP biosynthesis via de novo pathway; 5-amino-1-(5-phospho-D-ribosyl)imidazole from N(2)-formyl-N(1)-(5-phospho-D-ribosyl)glycinamide: step 2/2. The protein is Phosphoribosylformylglycinamidine cyclo-ligase of Shewanella amazonensis (strain ATCC BAA-1098 / SB2B).